A 186-amino-acid chain; its full sequence is Large ribosomal subunit protein bL9 (186 aa).

Residues 151–167 show a composition bias toward basic and acidic residues; sequence PEEAEKQARGEAIMREE. A disordered region spans residues 151 to 186; sequence PEEAEKQARGEAIMREESEYELETGEEVAEGPEQTA. A compositionally biased stretch (acidic residues) spans 168 to 180; that stretch reads SEYELETGEEVAE.

Belongs to the bacterial ribosomal protein bL9 family.

Binds to the 23S rRNA. This chain is Large ribosomal subunit protein bL9, found in Acidiphilium cryptum (strain JF-5).